The primary structure comprises 247 residues: ATP synthase subunit a (247 aa).

6 helical membrane passes run 24 to 44 (IAFTNSSAYMFLAVALTSLLM), 82 to 102 (FFPFVFSIFMLVTVSNLVGII), 112 to 132 (IIVTAALAFLVFFTVLIYGFY), 141 to 161 (LFVPSGIPVVILPLVVTIEVI), 194 to 214 (MLGAMGIVGVFGAVLPLALVV), and 219 to 239 (LELLVAFLQAYVFTILTCIYI).

It belongs to the ATPase A chain family. As to quaternary structure, F-type ATPases have 2 components, CF(1) - the catalytic core - and CF(0) - the membrane proton channel. CF(1) has five subunits: alpha(3), beta(3), gamma(1), delta(1), epsilon(1). CF(0) has three main subunits: a(1), b(2) and c(9-12). The alpha and beta chains form an alternating ring which encloses part of the gamma chain. CF(1) is attached to CF(0) by a central stalk formed by the gamma and epsilon chains, while a peripheral stalk is formed by the delta and b chains.

The protein localises to the cell inner membrane. Functionally, key component of the proton channel; it plays a direct role in the translocation of protons across the membrane. The polypeptide is ATP synthase subunit a (Nitrobacter winogradskyi (strain ATCC 25391 / DSM 10237 / CIP 104748 / NCIMB 11846 / Nb-255)).